The chain runs to 201 residues: MVGVIRRLNVVRELLNIRAGPGAALLPKEVTKVHMQFAHRIEEGHMGPRKFWRENLPKLKYWNPAVPMVINRTTDQKGPAVMTIYFRDDKDAKPSSTPFPTSSADGSSPAPKPAQGERIVTIDMKNRNSSVILKEFLDKTGAVAVQPTAKDEEEFREFEDLHRRSEIDRERIRKMNDAKKREKAMLAKAMSDAQSIKAASA.

Residues 87-118 form a disordered region; that stretch reads RDDKDAKPSSTPFPTSSADGSSPAPKPAQGER. The segment covering 94–106 has biased composition (polar residues); sequence PSSTPFPTSSADG.

Belongs to the mitochondrion-specific ribosomal protein mL61 family. In terms of assembly, component of the mitochondrial large ribosomal subunit (mt-LSU). Mature N.crassa 74S mitochondrial ribosomes consist of a small (37S) and a large (54S) subunit. The 37S small subunit contains a 16S ribosomal RNA (16S mt-rRNA) and 32 different proteins. The 54S large subunit contains a 23S rRNA (23S mt-rRNA) and 42 different proteins.

It localises to the mitochondrion. Functionally, component of the mitochondrial ribosome (mitoribosome), a dedicated translation machinery responsible for the synthesis of mitochondrial genome-encoded proteins, including at least some of the essential transmembrane subunits of the mitochondrial respiratory chain. The mitoribosomes are attached to the mitochondrial inner membrane and translation products are cotranslationally integrated into the membrane. This Neurospora crassa (strain ATCC 24698 / 74-OR23-1A / CBS 708.71 / DSM 1257 / FGSC 987) protein is Large ribosomal subunit protein mL61 (mrp49).